A 233-amino-acid polypeptide reads, in one-letter code: Small ribosomal subunit protein uS2 (233 aa).

This sequence belongs to the universal ribosomal protein uS2 family.

In Bacillus cytotoxicus (strain DSM 22905 / CIP 110041 / 391-98 / NVH 391-98), this protein is Small ribosomal subunit protein uS2.